The sequence spans 203 residues: Ribonuclease T (203 aa).

In terms of domain architecture, Exonuclease spans 11 to 185 (VVVDVETGGF…YDTEKTAELF (175 aa)). D14, E16, H172, and D177 together coordinate Mg(2+). H172 functions as the Proton donor/acceptor in the catalytic mechanism.

Belongs to the RNase T family. As to quaternary structure, homodimer. The cofactor is Mg(2+).

Its function is as follows. Trims short 3' overhangs of a variety of RNA species, leaving a one or two nucleotide 3' overhang. Responsible for the end-turnover of tRNA: specifically removes the terminal AMP residue from uncharged tRNA (tRNA-C-C-A). Also appears to be involved in tRNA biosynthesis. The polypeptide is Ribonuclease T (Pseudomonas putida (strain ATCC 47054 / DSM 6125 / CFBP 8728 / NCIMB 11950 / KT2440)).